The following is a 40-amino-acid chain: Trypsin inhibitor (40 aa).

As to quaternary structure, monomer.

The catalysed reaction is Preferential cleavage: Arg-|-Xaa, Lys-|-Xaa.. Its function is as follows. Inhibits trypsin but not chymotrypsin, papain or porcine pancreatic alpha-amylase. Has insecticidal activity against A.aegypti. Functions by inhibiting the A.aegypti midgut proteases to reduce the survival of larva and adults. The polypeptide is Trypsin inhibitor (Cassia leiandra (Marimari)).